A 599-amino-acid polypeptide reads, in one-letter code: Matrix metallopeptidase-21 (599 aa).

Positions 1–20 (MLTVIRRIFIIQTFIFITAE) are cleaved as a signal peptide. The propeptide occupies 21–170 (KIFHSRDHSD…NHEHQAPVRK (150 aa)). Position 130 (Cys-130) interacts with Zn(2+). Residues 141 to 170 (DVTGSNSTRNHIRTSTNTSHNHEHQAPVRK) are disordered. The segment covering 143-159 (TGSNSTRNHIRTSTNTS) has biased composition (polar residues). His-309 serves as a coordination point for Zn(2+). Glu-310 is an active-site residue. Residues His-313 and His-319 each coordinate Zn(2+). Cys-355 and Cys-586 are disulfide-bonded. Hemopexin repeat units follow at residues 356–415 (TGRF…WHGL), 417–473 (SGGV…FPGV), 474–522 (SGPL…FPAI), and 529–585 (VRSL…WFDI). Asn-398 is a glycosylation site (N-linked (GlcNAc...) asparagine).

Belongs to the peptidase M10A family. In terms of processing, the precursor is cleaved by a furin endopeptidase.

Functionally, plays a specialized role in the generation of left-right asymmetry during embryogenesis. May act as a negative regulator of the NOTCH-signaling pathway. The protein is Matrix metallopeptidase-21 of Danio rerio (Zebrafish).